Consider the following 1349-residue polypeptide: ABC multidrug transporter G (1349 aa).

The ABC transporter 1 domain maps to 51–299 (RQFLGFLKGS…FEDMGFVCPK (249 aa)). Asn-144 carries N-linked (GlcNAc...) asparagine glycosylation. 4 helical membrane-spanning segments follow: residues 407-427 (LSLI…GSLF), 436-456 (SIFL…LESM), 492-512 (IPVV…MAAL), and 523-543 (WIIV…VGAL). N-linked (GlcNAc...) asparagine glycosylation is present at Asn-549. Transmembrane regions (helical) follow at residues 550-570 (ASKI…YLIP) and 580-600 (WIFY…NEFV). A glycan (N-linked (GlcNAc...) asparagine) is linked at Asn-649. Residues 659 to 679 (FGVIIGFWVFFIVLTALGLEL) form a helical membrane-spanning segment. In terms of domain architecture, ABC transporter 2 spans 721–963 (FTWHDLDYHV…VLDYFARHGA (243 aa)). ATP is bound at residue 757 to 764 (GCSGAGKT). Asn-994 carries N-linked (GlcNAc...) asparagine glycosylation. 6 helical membrane-spanning segments follow: residues 1056-1076 (VILH…IGDG), 1085-1105 (FAIF…QPFF), 1121-1143 (IYHW…ILCA), 1166-1186 (MYLQ…GIAA), 1193-1213 (FAAV…CGVV), and 1226-1246 (WLYY…EVLW). N-linked (GlcNAc...) asparagine glycosylation is present at Asn-1287. A helical transmembrane segment spans residues 1318-1338 (TGITALFCVSSYAMVFLMMKL).

This sequence belongs to the ABC transporter superfamily. ABCG family. PDR (TC 3.A.1.205) subfamily.

It is found in the cell membrane. Its function is as follows. ABC efflux transporter that seems not to be able to transport azoles, nor rhodamine 6G (R-6G), a known substrate for many ABC transporters. The sequence is that of ABC multidrug transporter G from Aspergillus fumigatus (strain ATCC MYA-4609 / CBS 101355 / FGSC A1100 / Af293) (Neosartorya fumigata).